Reading from the N-terminus, the 367-residue chain is uncharacterized protein (367 aa).

Residues Arg333–Ser367 form a disordered region. The span at Ala341–Gln351 shows a compositional bias: low complexity.

This is an uncharacterized protein from Amazona oratrix (yellow-headed parrot).